We begin with the raw amino-acid sequence, 139 residues long: Histone H3 (139 aa).

Residues 1 to 48 (MARTKSTVIARKVTGGKAPRKQIGSKAARKSAAPSNTSGGVKKPHRYK) are disordered. Lys-5 bears the N6,N6,N6-trimethyllysine; alternate mark. Lys-5 bears the N6,N6-dimethyllysine; alternate mark. 2 positions are modified to N6-methyllysine; alternate: Lys-5 and Lys-12. N6-acetyllysine; alternate is present on residues Lys-12, Lys-17, Lys-21, Lys-26, Lys-30, and Lys-42. An N6,N6-dimethyllysine; alternate modification is found at Lys-17. An N6-methyllysine; alternate mark is found at Lys-21, Lys-26, Lys-30, and Lys-42. N6,N6,N6-trimethyllysine; alternate is present on residues Lys-30 and Lys-42. N6,N6-dimethyllysine; alternate is present on residues Lys-30 and Lys-42. N6-acetyllysine is present on residues Lys-62 and Lys-70. Lys-85 carries the N6,N6,N6-trimethyllysine; alternate modification. At Lys-85 the chain carries N6,N6-dimethyllysine; alternate. Lys-85 is subject to N6-methyllysine; alternate.

This sequence belongs to the histone H3 family. The nucleosome is a histone octamer containing two molecules each of H2A, H2B, H3 and H4 assembled in one H3-H4 heterotetramer and two H2A-H2B heterodimers. The octamer wraps approximately 147 bp of DNA. Post-translationally, mono-, di- and trimethylated by the COMPASS complex to form H3K4me1/2/3. H3K4me activates gene expression by regulating transcription elongation and plays a role in telomere length maintenance. H3K4me enrichment correlates with transcription levels, and occurs in a 5' to 3' gradient with H3K4me3 enrichment at the 5'-end of genes, shifting to H3K4me2 and then H3K4me1. Methylated by SET2 to form H3K36me. H3K36me represses gene expression. Methylated by DOT1 to form H3K79me. H3K79me is required for association of SIR proteins with telomeric regions and for telomeric silencing. The COMPASS-mediated formation of H3K4me2/3 and the DOT1-mediated formation of H3K79me require H2BK123ub1. In terms of processing, acetylation of histone H3 leads to transcriptional activation. Acetylated by GCN5 to form H3K14ac. H3K14ac can also be formed by ESA1. H3K56ac formation occurs predominantly in newly synthesized H3 molecules during G1, S and G2/M of the cell cycle and may be involved in DNA repair.

Its subcellular location is the nucleus. It is found in the chromosome. Its function is as follows. Core component of nucleosome. Nucleosomes wrap and compact DNA into chromatin, limiting DNA accessibility to the cellular machineries which require DNA as a template. Histones thereby play a central role in transcription regulation, DNA repair, DNA replication and chromosomal stability. DNA accessibility is regulated via a complex set of post-translational modifications of histones, also called histone code, and nucleosome remodeling. This Yarrowia lipolytica (strain CLIB 122 / E 150) (Yeast) protein is Histone H3 (HHT1).